The following is a 1376-amino-acid chain: DNA-directed RNA polymerase subunit beta (1376 aa).

The span at 1357 to 1368 shows a compositional bias: polar residues; it reads NSKTGRQTNPGT. Residues 1357 to 1376 form a disordered region; sequence NSKTGRQTNPGTRENLPAAE.

Belongs to the RNA polymerase beta chain family. The RNAP catalytic core consists of 2 alpha, 1 beta, 1 beta' and 1 omega subunit. When a sigma factor is associated with the core the holoenzyme is formed, which can initiate transcription.

The catalysed reaction is RNA(n) + a ribonucleoside 5'-triphosphate = RNA(n+1) + diphosphate. DNA-dependent RNA polymerase catalyzes the transcription of DNA into RNA using the four ribonucleoside triphosphates as substrates. The polypeptide is DNA-directed RNA polymerase subunit beta (Azorhizobium caulinodans (strain ATCC 43989 / DSM 5975 / JCM 20966 / LMG 6465 / NBRC 14845 / NCIMB 13405 / ORS 571)).